Reading from the N-terminus, the 495-residue chain is 2-carboxy-D-arabinitol-1-phosphatase (495 aa).

Residues 1–12 (MLLFAPTPPPSP) show a composition bias toward pro residues. The interval 1-23 (MLLFAPTPPPSPATAHRRPGGSA) is disordered. The N-terminal 50 residues, 1 to 50 (MLLFAPTPPPSPATAHRRPGGSAASCIRCSSVRELDRSPSRPPLPPLAEA), are a transit peptide targeting the chloroplast. The Tele-phosphohistidine intermediate role is filled by histidine 58. Glutamate 132 (proton donor/acceptor) is an active-site residue.

This sequence belongs to the phosphoglycerate mutase family.

The protein localises to the plastid. It is found in the chloroplast stroma. The enzyme catalyses 2-carboxy-D-arabinitol 1-phosphate + H2O = 2-carboxy-D-arabinitol + phosphate. Its activity is regulated as follows. Inactivated by oxidized glutathione (GSSG) at pH 8.0. Functionally, phosphoglycerate mutase-like protein lacking PGM activity, but having 2-carboxy-D-arabinitol 1-phosphate (CA1P) phosphatase activity. Can dephosphorylate the closely related compounds 2-carboxy-D-arabinitol 1,5-bisphosphate (CABP) and 2-carboxy-D-ribitol-1,5-bisphosphate(CRBP), and 2,3-diphosphoglycerate. Prevents the accumulation of D-glycero-2,3-pentodiulose-1,5-bisphosphate (PDBP) a potent inhibitor of ribulose-1,5-bisphosphate carboxylase (RuBisCO). PDBP is produced during the oxidation of ribulose-1,5-bisphosphate, the substrate of RuBisCO. In Triticum aestivum (Wheat), this protein is 2-carboxy-D-arabinitol-1-phosphatase.